The chain runs to 329 residues: NADH-quinone oxidoreductase subunit H 2 (329 aa).

8 helical membrane-spanning segments follow: residues 12-32 (GAKI…LVFA), 78-98 (WLFY…FAVI), 120-140 (VGLL…ALGG), 159-179 (LISY…LAGS), 191-211 (GVWF…SIAA), 242-262 (LFFV…TTFF), 270-290 (LLPP…FFIW), and 309-329 (KVLT…LMFV).

Belongs to the complex I subunit 1 family. As to quaternary structure, NDH-1 is composed of 14 different subunits. Subunits NuoA, H, J, K, L, M, N constitute the membrane sector of the complex.

The protein resides in the cell inner membrane. It carries out the reaction a quinone + NADH + 5 H(+)(in) = a quinol + NAD(+) + 4 H(+)(out). In terms of biological role, NDH-1 shuttles electrons from NADH, via FMN and iron-sulfur (Fe-S) centers, to quinones in the respiratory chain. The immediate electron acceptor for the enzyme in this species is believed to be ubiquinone. Couples the redox reaction to proton translocation (for every two electrons transferred, four hydrogen ions are translocated across the cytoplasmic membrane), and thus conserves the redox energy in a proton gradient. This subunit may bind ubiquinone. This chain is NADH-quinone oxidoreductase subunit H 2, found in Geobacter sulfurreducens (strain ATCC 51573 / DSM 12127 / PCA).